We begin with the raw amino-acid sequence, 213 residues long: rRNA N(6)-adenosine-methyltransferase Mettl5 (213 aa).

S-adenosyl-L-methionine is bound by residues Gln-28, Thr-31, Gly-59, Cys-62, and 108–109 (DV).

The protein belongs to the methyltransferase superfamily. PrmA family. As to quaternary structure, heterodimer; heterodimerizes with Trmt112. Enriched in the brain.

The protein resides in the cytoplasm. The enzyme catalyses adenosine in rRNA + S-adenosyl-L-methionine = N(6)-methyladenosine in rRNA + S-adenosyl-L-homocysteine + H(+). Functionally, catalytic subunit of a heterodimer with Trmt112, which specifically methylates the 6th position of adenine in 18S rRNA. In Drosophila melanogaster (Fruit fly), this protein is rRNA N(6)-adenosine-methyltransferase Mettl5.